The sequence spans 1088 residues: RNA-directed RNA polymerase (1088 aa).

The 187-residue stretch at 501-687 folds into the RdRp catalytic domain; sequence LSYGDVTRFL…AKRYIAGGKI (187 aa).

It belongs to the reoviridae RNA-directed RNA polymerase family. Interacts with VP3 (Potential). Interacts with VP2; this interaction activates VP1. Interacts with NSP5; this interaction is probably necessary for the formation of functional virus factories. Interacts with NSP2; this interaction is weak. Mg(2+) is required as a cofactor.

The protein resides in the virion. The enzyme catalyses RNA(n) + a ribonucleoside 5'-triphosphate = RNA(n+1) + diphosphate. RNA-directed RNA polymerase that is involved in both transcription and genome replication. Together with VP3 capping enzyme, forms an enzyme complex positioned near the channels situated at each of the five-fold vertices of the core. Following infection, the outermost layer of the virus is lost, leaving a double-layered particle (DLP) made up of the core and VP6 shell. VP1 then catalyzes the transcription of fully conservative plus-strand genomic RNAs that are extruded through the DLP's channels into the cytoplasm where they function as mRNAs for translation of viral proteins. One copy of each of the viral (+)RNAs is also recruited during core assembly, together with newly synthesized polymerase complexes and VP2. The polymerase of these novo-formed particles catalyzes the synthesis of complementary minus-strands leading to dsRNA formation. To do so, the polymerase specifically recognizes and binds 4 bases 5'-UGUG-3' in the conserved 3'-sequence of plus-strand RNA templates. VP2 presumably activates the autoinhibited VP1-RNA complex to coordinate packaging and genome replication. Once dsRNA synthesis is complete, the polymerase switches to the transcriptional mode, thus providing secondary transcription. This chain is RNA-directed RNA polymerase, found in Sus scrofa (Pig).